Here is a 607-residue protein sequence, read N- to C-terminus: MKWVTFISLLLLFSSAYSRGVFRRDTHKSEIAHRFNDLGEENFQGLVLIAFSQYLQQCPFDEHVKLVKELTEFAKTCVADESHAGCDKSLHTLFGDELCKVATLRETYGDMADCCEKQEPERNECFLNHKDDSPDLPKLKPEPDTLCAEFKADEKKFWGKYLYEVARRHPYFYAPELLYYANKYNGVFQECCQAEDKGACLLPKIDAMREKVLASSARQRLRCASIQKFGERALKAWSVARLSQKFPKADFTDVTKIVTDLTKVHKECCHGDLLECADDRADLAKYICDHQDALSSKLKECCDKPVLEKSHCIAEVDKDAVPENLPPLTADFAEDKEVCKNYQEAKDVFLGSFLYEYSRRHPEYAVSVLLRLAKEYEATLEDCCAKEDPHACYATVFDKLKHLVDEPQNLIKKNCELFEKHGEYGFQNALIVRYTRKAPQVSTPTLVEISRSLGKVGTKCCAKPESERMPCTEDYLSLILNRLCVLHEKTPVSEKVTKCCTESLVNRRPCFSDLTLDETYVPKPFDEKFFTFHADICTLPDTEKQIKKQTALVELLKHKPKATDEQLKTVMENFVAFVDKCCAADDKEGCFVLEGPKLVASTQAALA.

An N-terminal signal peptide occupies residues 1–18 (MKWVTFISLLLLFSSAYS). The propeptide occupies 19–24 (RGVFRR). Albumin domains lie at 19-209 (RGVF…DAMR), 210-402 (EKVL…KLKH), and 403-600 (LVDE…KLVA). Position 27 (His27) interacts with Cu cation. A Phosphoserine modification is found at Ser29. Ca(2+)-binding residues include Glu30 and Asp37. Cysteines 77 and 86 form a disulfide. Phosphoserine is present on residues Ser82 and Ser89. His91 is a binding site for Zn(2+). 6 disulfides stabilise this stretch: Cys99–Cys115, Cys114–Cys125, Cys147–Cys192, Cys191–Cys200, Cys223–Cys269, and Cys268–Cys276. Phosphothreonine is present on Thr107. Lys228 is modified (N6-succinyllysine). Ca(2+) is bound at residue Glu267. Zn(2+) is bound by residues His270 and Asp272. The Ca(2+) site is built by Asp272, Glu275, Asp278, and Asp282. 8 disulfide bridges follow: Cys288–Cys302, Cys301–Cys312, Cys339–Cys384, Cys383–Cys392, Cys415–Cys461, Cys460–Cys471, Cys484–Cys500, and Cys499–Cys510. Ser296 bears the Phosphoserine mark. Ser442 bears the Phosphoserine mark. Thr443 and Thr445 each carry phosphothreonine. Lys459 bears the N6-succinyllysine mark. At Ser512 the chain carries Phosphoserine. 2 disulfides stabilise this stretch: Cys537-Cys582 and Cys581-Cys590. N6-methyllysine is present on Lys557. Thr569 carries the post-translational modification Phosphothreonine. Lys587 carries the N6-succinyllysine modification.

It belongs to the ALB/AFP/VDB family. Interacts with FCGRT; this interaction regulates ALB homeostasis. Interacts with TASOR. In plasma, occurs in a covalently-linked complex with chromophore-bound alpha-1-microglobulin; this interaction does not prevent fatty acid binding to ALB. In terms of processing, phosphorylated by FAM20C in the extracellular medium. In terms of tissue distribution, plasma.

The protein resides in the secreted. Functionally, binds water, Ca(2+), Na(+), K(+), fatty acids, hormones, bilirubin and drugs. Its main function is the regulation of the colloidal osmotic pressure of blood. Major zinc transporter in plasma, typically binds about 80% of all plasma zinc. Major calcium and magnesium transporter in plasma, binds approximately 45% of circulating calcium and magnesium in plasma. Potentially has more than two calcium-binding sites and might additionally bind calcium in a non-specific manner. The shared binding site between zinc and calcium at residue Asp-272 suggests a crosstalk between zinc and calcium transport in the blood. The rank order of affinity is zinc &gt; calcium &gt; magnesium. Binds to the bacterial siderophore enterobactin and inhibits enterobactin-mediated iron uptake of E.coli from ferric transferrin, and may thereby limit the utilization of iron and growth of enteric bacteria such as E.coli. Does not prevent iron uptake by the bacterial siderophore aerobactin. The sequence is that of Albumin (ALB) from Ovis aries (Sheep).